A 143-amino-acid polypeptide reads, in one-letter code: Small ribosomal subunit protein eS19B (143 aa).

Belongs to the eukaryotic ribosomal protein eS19 family. In terms of assembly, component of the small ribosomal subunit (SSU). Mature yeast ribosomes consist of a small (40S) and a large (60S) subunit. The 40S small subunit contains 1 molecule of ribosomal RNA (18S rRNA) and at least 33 different proteins. The large 60S subunit contains 3 rRNA molecules (25S, 5.8S and 5S rRNA) and at least 46 different proteins.

It is found in the cytoplasm. The protein localises to the nucleus. Component of the ribosome, a large ribonucleoprotein complex responsible for the synthesis of proteins in the cell. The small ribosomal subunit (SSU) binds messenger RNAs (mRNAs) and translates the encoded message by selecting cognate aminoacyl-transfer RNA (tRNA) molecules. The large subunit (LSU) contains the ribosomal catalytic site termed the peptidyl transferase center (PTC), which catalyzes the formation of peptide bonds, thereby polymerizing the amino acids delivered by tRNAs into a polypeptide chain. The nascent polypeptides leave the ribosome through a tunnel in the LSU and interact with protein factors that function in enzymatic processing, targeting, and the membrane insertion of nascent chains at the exit of the ribosomal tunnel. eS19 is required for proper maturation of the small (40S) ribosomal subunit. Binds to 40S pre-ribosomal particles, probably required after association of NOC4 but before association of ENP1, TSR1 and RIO2 with 20/21S pre-rRNA. The polypeptide is Small ribosomal subunit protein eS19B (rps1902) (Schizosaccharomyces pombe (strain 972 / ATCC 24843) (Fission yeast)).